The following is a 318-amino-acid chain: Deoxyribose-phosphate aldolase (318 aa).

Asp-155 acts as the Proton donor/acceptor in catalysis. Lys-218 functions as the Schiff-base intermediate with acetaldehyde in the catalytic mechanism. Residue Lys-254 is the Proton donor/acceptor of the active site.

Belongs to the DeoC/FbaB aldolase family. DeoC type 2 subfamily. In terms of assembly, interacts with YBX1.

The protein localises to the cytoplasm. It localises to the cytoplasmic granule. The protein resides in the nucleus. The enzyme catalyses 2-deoxy-D-ribose 5-phosphate = D-glyceraldehyde 3-phosphate + acetaldehyde. It participates in carbohydrate degradation; 2-deoxy-D-ribose 1-phosphate degradation; D-glyceraldehyde 3-phosphate and acetaldehyde from 2-deoxy-alpha-D-ribose 1-phosphate: step 2/2. Its function is as follows. Catalyzes a reversible aldol reaction between acetaldehyde and D-glyceraldehyde 3-phosphate to generate 2-deoxy-D-ribose 5-phosphate. Participates in stress granule (SG) assembly. May allow ATP production from extracellular deoxyinosine in conditions of energy deprivation. This Bos taurus (Bovine) protein is Deoxyribose-phosphate aldolase (DERA).